The chain runs to 446 residues: FAD-dependent monooxygenase eupB (446 aa).

The helical transmembrane segment at 10–30 (EPHIAIVGGGIVGVILTLGLL) threads the bilayer. N33 is a glycosylation site (N-linked (GlcNAc...) asparagine). Positions 40, 53, and 125 each coordinate FAD. Catalysis depends on residues R206 and Y239. An N-linked (GlcNAc...) asparagine glycan is attached at N243. Residues D322 and A335 each contribute to the FAD site. The N-linked (GlcNAc...) asparagine glycan is linked to N395.

This sequence belongs to the paxM FAD-dependent monooxygenase family. FAD serves as cofactor.

It localises to the membrane. Its pathway is secondary metabolite biosynthesis; terpenoid biosynthesis. Its function is as follows. FAD-dependent monooxygenase; part of the gene cluster that mediates the biosynthesis of eupenifeldin, a bistropolone meroterpenoid that acts as an antitumor agent. The first step of eupenifeldin biosynthesis is the biosynthesis of 3-methylorcinaldehyde performed by the non-reducing polyketide synthase eupA. Oxidative dearomatization of 3-methylorcinaldehyde likely catalyzed by the FAD-dependent monooxygenase eupB is followed by oxidative ring expansion by the 2-oxoglutarate-dependent dioxygenase eupC to provide the first tropolone metabolite, tropolone stipitaldehyde. In parallel, generation of sesquiterpene alpha-humulene from farnesylpyrophosphate (FPP) is catalyzed by the terpene cyclase eupE. The cytochrome P450 monooxygenase eupD then hydroxylates humulene to humulenol. The putative Diels-Alderase eupF probably catalyzes the formation of the tropolone-humulene skeleton by linking humulenol and the polyketide moiety. The short-chain dehydrogenase/reductase eupG and the flavin-dependent monooxygenase eupH are also essential for eupenifeldin biosynthesis and are likely the additional decorating enzymes of the tropolone-humulene skeleton to produce final eupenifeldin or derivatives. This chain is FAD-dependent monooxygenase eupB, found in Phoma sp.